Consider the following 72-residue polypeptide: MAKDDVIQMQGEVQENLPNATFRVKLENGHVVLGHISGKMRMHYIRILPGDKVTVELTPYDLSRARIVFRAK.

The S1-like domain occupies 1-72 (MAKDDVIQMQ…SRARIVFRAK (72 aa)).

The protein belongs to the IF-1 family. In terms of assembly, component of the 30S ribosomal translation pre-initiation complex which assembles on the 30S ribosome in the order IF-2 and IF-3, IF-1 and N-formylmethionyl-tRNA(fMet); mRNA recruitment can occur at any time during PIC assembly.

It localises to the cytoplasm. One of the essential components for the initiation of protein synthesis. Stabilizes the binding of IF-2 and IF-3 on the 30S subunit to which N-formylmethionyl-tRNA(fMet) subsequently binds. Helps modulate mRNA selection, yielding the 30S pre-initiation complex (PIC). Upon addition of the 50S ribosomal subunit IF-1, IF-2 and IF-3 are released leaving the mature 70S translation initiation complex. The sequence is that of Translation initiation factor IF-1 1 from Ralstonia nicotianae (strain ATCC BAA-1114 / GMI1000) (Ralstonia solanacearum).